The chain runs to 528 residues: Putative galacturonosyltransferase 2 (528 aa).

Belongs to the glycosyltransferase 8 family.

It functions in the pathway glycan metabolism; pectin biosynthesis. Its function is as follows. May be involved in pectin and/or xylans biosynthesis in cell walls. This chain is Putative galacturonosyltransferase 2 (GAUT2), found in Arabidopsis thaliana (Mouse-ear cress).